The sequence spans 383 residues: S-adenosylmethionine synthase (383 aa).

Residue H15 participates in ATP binding. D17 is a binding site for Mg(2+). E43 contributes to the K(+) binding site. E56 and Q99 together coordinate L-methionine. The flexible loop stretch occupies residues 99-109 (QSPDINQGVDR). Residues 164–166 (DAK), 230–231 (RF), D239, 245–246 (RK), A262, and K266 contribute to the ATP site. Residue D239 participates in L-methionine binding. K270 serves as a coordination point for L-methionine.

It belongs to the AdoMet synthase family. In terms of assembly, homotetramer; dimer of dimers. Mg(2+) is required as a cofactor. Requires K(+) as cofactor.

It is found in the cytoplasm. It catalyses the reaction L-methionine + ATP + H2O = S-adenosyl-L-methionine + phosphate + diphosphate. It participates in amino-acid biosynthesis; S-adenosyl-L-methionine biosynthesis; S-adenosyl-L-methionine from L-methionine: step 1/1. In terms of biological role, catalyzes the formation of S-adenosylmethionine (AdoMet) from methionine and ATP. The overall synthetic reaction is composed of two sequential steps, AdoMet formation and the subsequent tripolyphosphate hydrolysis which occurs prior to release of AdoMet from the enzyme. The sequence is that of S-adenosylmethionine synthase from Shewanella sp. (strain W3-18-1).